The chain runs to 906 residues: MTSATSPIILKWDPKSLEIRTLTVERLLEPLVTQVTTLVNTSNKGPSGKKKGRSKKAHVLAASVEQATQNFLEKGDQIAKESQDLKEELVAAVEDVRKQGETMRIASSEFADDPCSSVKRGTMVRAARALLSAVTRLLILADMADVMRLLSHLKIVEEALEAVKNATNEQDLANRFKEFGKEMVKLNYVAARRQQELKDPHCRDEMAAARGALKKNATMLYTASQAFLRHPDVAATRANRDYVFKQVQEAIAGISNAAQATSPTDENKGHTGIGELAAALNEFDNKIILDPMTFSEARFRPSLEERLESIISGAALMADSSCTRDDRRKRIVAECKRAVRQALQDLLSEYMNNTGRKEKGDPLNIAIDKMTKKTRDLRRQLRKAVMDHISDSFLETNVPLLVLIEAAKSGNEKEVKEYAQVFREHANKLVEVANLACSISNNEEGVKLVRMAATQIDSLCPQVINAALTLAARPQSKVAQDNMDVFKDQWEKQVRVLTEAVDDITSVDDFLSVSENHILEDVNKCVIALQEGDVDTLDRTAGAIRGRAARVIHIINAEMENYETGVYTEKVLEATKLLSETVMPRFAEQVEVAIEALSANVPQPFEENEFIDASRLVYDGVRDIRKAVLMIRTPEELEDDSDFEQEDYDVRSRTSVQTEDDQLIAGQSARAIMAQLPQEEKAKIAEQVEIFHQEKSKLDAEVAKWDDSGNDIIVLAKQMCMIMMEMTDFTRGKGPLKNTSDVINAAKKIAEAGSRMDKLARAVADQCPDSACKQDLLAYLQRIALYCHQLNICSKVKAEVQNLGGELIVSGLDSATSLIQAAKNLMNAVVLTVKASYVASTKYQKVYGTAAVNSPVVSWKMKAPEKKPLVKREKPEEYQTRVRRGSQKKHISPVQALSEFKAMDSF.

A compositionally biased stretch (basic and acidic residues) spans 866–880 (KKPLVKREKPEEYQT). A disordered region spans residues 866–892 (KKPLVKREKPEEYQTRVRRGSQKKHIS). A compositionally biased stretch (basic residues) spans 881-891 (RVRRGSQKKHI).

It belongs to the vinculin/alpha-catenin family. In terms of assembly, interacts with CDH1 and CDH2. In terms of tissue distribution, mainly in the nervous system (at protein level).

Its subcellular location is the cell membrane. It is found in the cytoplasm. The protein localises to the cytoskeleton. The protein resides in the cell junction. It localises to the adherens junction. Its subcellular location is the cell projection. It is found in the axon. The protein localises to the nucleus. Functionally, may function as a linker between cadherin adhesion receptors and the cytoskeleton to regulate cell-cell adhesion and differentiation in the nervous system. This Gallus gallus (Chicken) protein is Catenin alpha-2 (CTNNA2).